Reading from the N-terminus, the 240-residue chain is Ubiquinone biosynthesis O-methyltransferase (240 aa).

4 residues coordinate S-adenosyl-L-methionine: Arg-44, Gly-64, Asp-85, and Met-129.

Belongs to the methyltransferase superfamily. UbiG/COQ3 family.

The catalysed reaction is a 3-demethylubiquinol + S-adenosyl-L-methionine = a ubiquinol + S-adenosyl-L-homocysteine + H(+). It carries out the reaction a 3-(all-trans-polyprenyl)benzene-1,2-diol + S-adenosyl-L-methionine = a 2-methoxy-6-(all-trans-polyprenyl)phenol + S-adenosyl-L-homocysteine + H(+). It participates in cofactor biosynthesis; ubiquinone biosynthesis. Its function is as follows. O-methyltransferase that catalyzes the 2 O-methylation steps in the ubiquinone biosynthetic pathway. In Escherichia coli (strain K12 / MC4100 / BW2952), this protein is Ubiquinone biosynthesis O-methyltransferase.